Here is a 1651-residue protein sequence, read N- to C-terminus: A.superbus venom factor 2 (1651 aa).

The signal sequence occupies residues 1–22 (MEGMALYLVAALLIGFPGSSHG). Asparagine 189 is a glycosylation site (N-linked (GlcNAc...) asparagine). 4 residues coordinate Mg(2+): proline 519, aspartate 542, valine 543, and aspartate 545. Cystine bridges form between cysteine 547–cysteine 808, cysteine 616–cysteine 651, cysteine 684–cysteine 711, cysteine 685–cysteine 718, cysteine 698–cysteine 719, cysteine 864–cysteine 1501, cysteine 1346–cysteine 1477, cysteine 1377–cysteine 1446, cysteine 1494–cysteine 1499, cysteine 1506–cysteine 1578, cysteine 1525–cysteine 1649, and cysteine 1625–cysteine 1634. The propeptide occupies 657–739 (RRRRSSVLLL…QRESELFLAR (83 aa)). The segment at 661 to 739 (SSVLLLDSKA…QRESELFLAR (79 aa)) is C3a-like domain. The region spanning 684-719 (CCEDGMHENPMGYTCEKRAKYTQEGDACKAAFLECC) is the Anaphylatoxin-like domain. The factor B binding site stretch occupies residues 743–754 (EDEFFEEDNIIS). The propeptide occupies 992–1269 (HLIITPSGSG…VMVFQALAEY (278 aa)). The segment at 992–1269 (HLIITPSGSG…VMVFQALAEY (278 aa)) is C3d-like domain. Positions 1197–1259 (VLMAASTGRD…GGTYGQTQAT (63 aa)) are factor H binding site. Residues asparagine 1282 and asparagine 1352 are each glycosylated (N-linked (GlcNAc...) asparagine). One can recognise an NTR domain in the interval 1506–1649 (CSLLNQQKKI…LSNTLTIFGC (144 aa)).

This sequence belongs to the venom complement C3 homolog family. As to quaternary structure, heterotrimer of alpha, beta and gamma chains; disulfide-linked. Is active with factor B in the presence of factor D. First processed by the removal of 4 Arg residues by furin-type protease, forming two chains, alpha and gamma/beta precursor, linked by a disulfide bond. This mature AVF is composed of three chains: alpha, gamma and beta. Expressed by the venom gland.

The protein localises to the secreted. Complement-activating protein in snake venom. It is a structural and functional analog of complement component C3b, the activated form of C3. It binds factor B (CFB), which is subsequently cleaved by factor D (CFD) to form the bimolecular complex AVF/Bb. AVF/Bb is a C3 convertase that cleaves complement component C3, but not C5 (as do CVF/Bb). The sequence is that of A.superbus venom factor 2 from Austrelaps superbus (Lowland copperhead snake).